The following is a 355-amino-acid chain: S-adenosylmethionine:tRNA ribosyltransferase-isomerase (355 aa).

This sequence belongs to the QueA family. As to quaternary structure, monomer.

The protein resides in the cytoplasm. The enzyme catalyses 7-aminomethyl-7-carbaguanosine(34) in tRNA + S-adenosyl-L-methionine = epoxyqueuosine(34) in tRNA + adenine + L-methionine + 2 H(+). The protein operates within tRNA modification; tRNA-queuosine biosynthesis. Its function is as follows. Transfers and isomerizes the ribose moiety from AdoMet to the 7-aminomethyl group of 7-deazaguanine (preQ1-tRNA) to give epoxyqueuosine (oQ-tRNA). This is S-adenosylmethionine:tRNA ribosyltransferase-isomerase from Burkholderia orbicola (strain AU 1054).